Consider the following 1328-residue polypeptide: DNA-directed RNA polymerase subunit beta (1328 aa).

Belongs to the RNA polymerase beta chain family. As to quaternary structure, the RNAP catalytic core consists of 2 alpha, 1 beta, 1 beta' and 1 omega subunit. When a sigma factor is associated with the core the holoenzyme is formed, which can initiate transcription.

The catalysed reaction is RNA(n) + a ribonucleoside 5'-triphosphate = RNA(n+1) + diphosphate. Its function is as follows. DNA-dependent RNA polymerase catalyzes the transcription of DNA into RNA using the four ribonucleoside triphosphates as substrates. The protein is DNA-directed RNA polymerase subunit beta of Karelsulcia muelleri (strain GWSS) (Sulcia muelleri).